Consider the following 211-residue polypeptide: Thymidylate kinase (211 aa).

10–17 (GVEGCGKT) is a binding site for ATP.

The protein belongs to the thymidylate kinase family.

It catalyses the reaction dTMP + ATP = dTDP + ADP. Phosphorylation of dTMP to form dTDP in both de novo and salvage pathways of dTTP synthesis. The chain is Thymidylate kinase from Nostoc punctiforme (strain ATCC 29133 / PCC 73102).